The chain runs to 218 residues: Phosphatidylserine decarboxylase proenzyme (218 aa).

Serine 182 functions as the Schiff-base intermediate with substrate; via pyruvic acid in the catalytic mechanism. A Pyruvic acid (Ser); by autocatalysis modification is found at serine 182.

The protein belongs to the phosphatidylserine decarboxylase family. PSD-A subfamily. As to quaternary structure, heterodimer of a large membrane-associated beta subunit and a small pyruvoyl-containing alpha subunit. Requires pyruvate as cofactor. Post-translationally, is synthesized initially as an inactive proenzyme. Formation of the active enzyme involves a self-maturation process in which the active site pyruvoyl group is generated from an internal serine residue via an autocatalytic post-translational modification. Two non-identical subunits are generated from the proenzyme in this reaction, and the pyruvate is formed at the N-terminus of the alpha chain, which is derived from the carboxyl end of the proenzyme. The post-translation cleavage follows an unusual pathway, termed non-hydrolytic serinolysis, in which the side chain hydroxyl group of the serine supplies its oxygen atom to form the C-terminus of the beta chain, while the remainder of the serine residue undergoes an oxidative deamination to produce ammonia and the pyruvoyl prosthetic group on the alpha chain.

It localises to the cell membrane. The enzyme catalyses a 1,2-diacyl-sn-glycero-3-phospho-L-serine + H(+) = a 1,2-diacyl-sn-glycero-3-phosphoethanolamine + CO2. It functions in the pathway phospholipid metabolism; phosphatidylethanolamine biosynthesis; phosphatidylethanolamine from CDP-diacylglycerol: step 2/2. In terms of biological role, catalyzes the formation of phosphatidylethanolamine (PtdEtn) from phosphatidylserine (PtdSer). The protein is Phosphatidylserine decarboxylase proenzyme of Oleidesulfovibrio alaskensis (strain ATCC BAA-1058 / DSM 17464 / G20) (Desulfovibrio alaskensis).